The primary structure comprises 593 residues: Glutamate decarboxylase 1 (593 aa).

The segment covering 1 to 12 (MASSTPSPATSS) has biased composition (low complexity). The interval 1-22 (MASSTPSPATSSNAGADPNTTN) is disordered. A Phosphoserine modification is found at Ser77. 189-191 (QLS) contributes to the 4-aminobutanoate binding site. Residue Lys404 is modified to N6-(pyridoxal phosphate)lysine. Residue Arg566 coordinates 4-aminobutanoate.

Belongs to the group II decarboxylase family. Homodimer. Pyridoxal 5'-phosphate serves as cofactor. As to expression, expressed in brain and pancreatic islets.

The enzyme catalyses L-glutamate + H(+) = 4-aminobutanoate + CO2. Its function is as follows. Catalyzes the synthesis of the inhibitory neurotransmitter gamma-aminobutyric acid (GABA) with pyridoxal 5'-phosphate as cofactor. The protein is Glutamate decarboxylase 1 (Gad1) of Rattus norvegicus (Rat).